Consider the following 213-residue polypeptide: E3 ubiquitin-protein ligase NleG8 (213 aa).

The RING/U-box domain stretch occupies residues 136–189 (CPITLCVPETGVFVKNARCSKVCSLYDISALTEMLRRNASHPLSREAFTPGMIV). The PDZ-binding motif motif lies at 211–213 (TRL).

It belongs to the NleG E3 ligase family. As to quaternary structure, interacts with host GOPC (human protein).

It is found in the secreted. The protein resides in the host cytoplasm. The catalysed reaction is S-ubiquitinyl-[E2 ubiquitin-conjugating enzyme]-L-cysteine + [acceptor protein]-L-lysine = [E2 ubiquitin-conjugating enzyme]-L-cysteine + N(6)-ubiquitinyl-[acceptor protein]-L-lysine.. In terms of biological role, effector proteins function to alter host cell physiology and promote bacterial survival in host tissues. This protein is an E3 ubiquitin-protein ligase that probably interferes with the host's ubiquitination pathway and targets host proteins for proteasomal degradation. Mice infected with a strain of bacteria deleted for this gene had an increased survival rate. Can be ubiquitinylated, and ubiquitinate ubiquitin, giving rise to polyubiquitin chains (in vitro). The sequence is that of E3 ubiquitin-protein ligase NleG8 from Citrobacter rodentium.